The sequence spans 147 residues: Deoxyuridine 5'-triphosphate nucleotidohydrolase (147 aa).

Mg(2+) is bound at residue Arg-24. DUTP is bound by residues 68-70 (PRS), 82-85 (GVID), Tyr-88, Gly-93, Ile-95, and Arg-111.

It belongs to the dUTPase family. Mg(2+) is required as a cofactor.

It carries out the reaction dUTP + H2O = dUMP + diphosphate + H(+). This enzyme is involved in nucleotide metabolism: it produces dUMP, the immediate precursor of thymidine nucleotides and it decreases the intracellular concentration of dUTP so that uracil cannot be incorporated into DNA. The polypeptide is Deoxyuridine 5'-triphosphate nucleotidohydrolase (OPG046) (Homo sapiens (Human)).